The chain runs to 185 residues: Ribosome-recycling factor (185 aa).

This sequence belongs to the RRF family.

The protein localises to the cytoplasm. Functionally, responsible for the release of ribosomes from messenger RNA at the termination of protein biosynthesis. May increase the efficiency of translation by recycling ribosomes from one round of translation to another. This Pectobacterium carotovorum subsp. carotovorum (strain PC1) protein is Ribosome-recycling factor.